Here is a 789-residue protein sequence, read N- to C-terminus: Cadherin-6 (789 aa).

Positions Met-1–Pro-18 are cleaved as a signal peptide. Residues Thr-19–Arg-53 constitute a propeptide that is removed on maturation. Cadherin domains follow at residues Ser-54 to Phe-159, Thr-160 to Phe-268, Pro-269 to Phe-383, Ser-384 to Pro-486, and Glu-487 to Pro-608. The Extracellular segment spans residues Ser-54–Ala-615. A glycan (N-linked (GlcNAc...) asparagine) is linked at Asn-255. Residues Thr-259–Gly-288 are disordered. The span at Pro-269 to Glu-279 shows a compositional bias: polar residues. N-linked (GlcNAc...) asparagine glycosylation is found at Asn-399, Asn-437, Asn-455, and Asn-536. A helical transmembrane segment spans residues Leu-616–Leu-636. The Cytoplasmic segment spans residues Arg-637–Ser-789. Phosphoserine occurs at positions 785 and 789.

As to expression, highly expressed in kidney and brain.

It localises to the cell membrane. Cadherins are calcium-dependent cell adhesion proteins. They preferentially interact with themselves in a homophilic manner in connecting cells; cadherins may thus contribute to the sorting of heterogeneous cell types. The polypeptide is Cadherin-6 (Cdh6) (Rattus norvegicus (Rat)).